The sequence spans 386 residues: Galactokinase (386 aa).

Residue 32-35 coordinates substrate; that stretch reads EHTD. ATP is bound by residues S66 and 123-129; that span reads GASLSSS. Residues S129 and E161 each contribute to the Mg(2+) site. The Proton acceptor role is filled by D173. Y223 contacts substrate.

It belongs to the GHMP kinase family. GalK subfamily.

It localises to the cytoplasm. The enzyme catalyses alpha-D-galactose + ATP = alpha-D-galactose 1-phosphate + ADP + H(+). It functions in the pathway carbohydrate metabolism; galactose metabolism. Functionally, catalyzes the transfer of the gamma-phosphate of ATP to D-galactose to form alpha-D-galactose-1-phosphate (Gal-1-P). This chain is Galactokinase, found in Staphylococcus saprophyticus subsp. saprophyticus (strain ATCC 15305 / DSM 20229 / NCIMB 8711 / NCTC 7292 / S-41).